The sequence spans 4043 residues: Hybrid PKS-NRPS synthetase thnA (4043 aa).

Residues 6–440 enclose the Ketosynthase family 3 (KS3) domain; the sequence is LEPIAIVGSA…GSNAHAILEE (435 aa). Residues C179, H319, and H360 each act as for beta-ketoacyl synthase activity in the active site. The segment at 558 to 894 is malonyl-CoA:ACP transacylase (MAT) domain; the sequence is VFTGQGAQWA…FSDALGFVWT (337 aa). An N-terminal hotdog fold region spans residues 952–1090; sequence HEILGTILPE…ATVKIILGTP (139 aa). Positions 952 to 1256 are dehydratase (DH) domain; the sequence is HEILGTILPE…LSIKTFAPAT (305 aa). Residues 952–1258 form the PKS/mFAS DH domain; that stretch reads HEILGTILPE…IKTFAPATQA (307 aa). H984 acts as the Proton acceptor; for dehydratase activity in catalysis. The tract at residues 1105–1258 is C-terminal hotdog fold; it reads LFPIDADRFY…IKTFAPATQA (154 aa). D1166 serves as the catalytic Proton donor; for dehydratase activity. The methyltransferase (MT) domain stretch occupies residues 1417–1591; sequence LASMMKQITH…RKAGFAGVDA (175 aa). The segment at 2146 to 2320 is ketoreductase (KR) domain; the sequence is TYLLVGLTGK…GSTFDIGQVA (175 aa). A Carrier 1 domain is found at 2434 to 2512; the sequence is EQALDILKEC…ELCDRVVDKL (79 aa). S2472 carries the O-(pantetheine 4'-phosphoryl)serine modification. The disordered stretch occupies residues 2521 to 2618; that stretch reads GKQGESQPPA…PPPPEPAVER (98 aa). A compositionally biased stretch (low complexity) spans 2527–2536; that stretch reads QPPASTAQPQ. A compositionally biased stretch (pro residues) spans 2537–2547; it reads PVAPKPKPLPV. The span at 2578 to 2605 shows a compositional bias: polar residues; the sequence is YSATEASTRSGSPSEATRLSQKVSSKLQ. Residues 2626–3067 form a condensation (C) domain region; it reads IKSVPISLGQ…IPRFSEKQLA (442 aa). An adenylation (A) domain region spans residues 3092–3496; the sequence is QVARENPDKV…GTMVFHSRMA (405 aa). The Carrier 2 domain maps to 3614–3695; the sequence is TELTETMIQL…EMAQKVEETI (82 aa). At S3655 the chain carries O-(pantetheine 4'-phosphoryl)serine. The segment at 3736-3954 is reductase (R) domain; sequence ITGATGFLSK…DMLPAVLTAQ (219 aa).

In the C-terminal section; belongs to the NRP synthetase family.

It carries out the reaction malate + 6 malonyl-CoA + acetyl-CoA + 2 AH2 + 2 S-adenosyl-L-methionine + 5 NADPH + 9 H(+) = trihazone A + 2 A + 2 S-adenosyl-L-homocysteine + 6 CO2 + 5 NADP(+) + 7 CoA + 6 H2O. The protein operates within secondary metabolite biosynthesis. Its function is as follows. Hybrid PKS-NRPS synthetase; part of the gene cluster that produces the tetronate natural products trihazones. The PKS-NRPS synthetase thnA with the help of the trans-enoyl reductase thnE are responsible for the synthesis of the carboxylmethyl containing trihazone A. The PKS portion of thnA synthesizes beta-keto-triene chain from one acetyl-CoA and 6 equivalents of malonyl-CoA, in collaboration with thnE, which selectively reduces the enoyl intermediate during the first and fourth iteration of the PKS. The NRPS domain selects and activates malate, of which the alpha-hydroxyl group attacks the completed polyketide acyl-S-ACP chain to form the ester product. Intramolecular Dieckmann cyclization catalyzed by the terminal reductase domain releases the product as trihazone A from the PKS-NPRS. The pathway begins with the formation of trihazone A by the hybrid PKS-NRPS synthetase thnA and the trans-enoyl reductase thnE. Trihazone A is further decarboxylated by the 2-oxoglutarate-dependent dioxygenase thnC to produce trihazone D. The function of the FAD-dependent monooxygenase thnD has still to be identified. This is Hybrid PKS-NRPS synthetase thnA from Trichoderma harzianum (Hypocrea lixii).